Here is an 885-residue protein sequence, read N- to C-terminus: Insulin receptor substrate 1-A (885 aa).

Residues 1–56 form the IRS-type PTB domain; sequence MNIRRCGHSENFFFIEVGRSAVTGAGEFWMQVDDSVVAQNMHETILEAMKALSDEF. Positions 56-225 are disordered; that stretch reads FRPRSKSQSS…GGFISSDEYG (170 aa). 4 stretches are compositionally biased toward low complexity: residues 61 to 75, 99 to 109, 176 to 197, and 205 to 217; these read KSQS…ISVP, SATATSPAGGA, SPSA…GSTS, and SSAS…SDGG. Ser-104 bears the Phosphoserine mark. Tyr-257 carries the phosphotyrosine; by INSR modification. The short motif at 257–260 is the YXXM motif 1 element; it reads YICM. Composition is skewed to polar residues over residues 263–276 and 296–313; these read SSSH…QRYQ and SSGT…PSQS. Disordered stretches follow at residues 263–282 and 293–313; these read SSSH…RGEE and RTHS…PSQS. 5 consecutive short sequence motifs (YXXM motif) follow at residues 318-321, 364-367, 381-384, 409-412, and 451-454; these read YTEM, YMPM, YMMM, and YINM. Tyr-364 and Tyr-381 each carry phosphotyrosine; by INSR. Residue Tyr-409 is modified to Phosphotyrosine. A disordered region spans residues 501 to 581; that stretch reads NLRISANSGH…LPPEPKSPGE (81 aa). Over residues 504–515 the composition is skewed to polar residues; the sequence is ISANSGHNLYTE. The segment covering 516–526 has biased composition (low complexity); sequence DSSSSSTSSDS. Phosphotyrosine; by INSR is present on residues Tyr-582 and Tyr-620. Positions 582–584 are GRB2-binding; that stretch reads YVN. A YXXM motif 7 motif is present at residues 620–623; that stretch reads YMNM. Over residues 637–660 the composition is skewed to polar residues; it reads TSSYEPPNKPVNSVCPTETCSSSR. Residues 637–665 are disordered; that stretch reads TSSYEPPNKPVNSVCPTETCSSSRPPIRG. Position 672 is a phosphotyrosine; by INSR (Tyr-672). 2 short sequence motifs (YXXM motif) span residues 672 to 675 and 706 to 709; these read YMSM and YAEM. The disordered stretch occupies residues 732-803; it reads ASRSSLLGQG…SGEDVKRHSS (72 aa). 2 stretches are compositionally biased toward polar residues: residues 743-758 and 777-792; these read GPSA…NRNP and ETFS…TTGP. Phosphotyrosine; by INSR is present on residues Tyr-834 and Tyr-866.

In terms of assembly, interacts with the NPXY motif of tyrosine-phosphorylated igf1r and insr via the PTB domain. Binds to phosphatidylinositol 3-kinase p85 subunit at a low level in vitro prior to phosphorylation. Binding is greatly enhanced following tyrosine phosphorylation by insr and probably occurs via the phosphorylated YXXM motifs. In terms of processing, phosphorylation of Tyr-582 is required for grb2-binding.

May mediate the control of various cellular processes by insulin. When phosphorylated by the insulin receptor binds specifically to various cellular proteins containing SH2 domains such as phosphatidylinositol 3-kinase p85 subunit or grb2. Activates phosphatidylinositol 3-kinase when bound to the regulatory p85 subunit. This Xenopus laevis (African clawed frog) protein is Insulin receptor substrate 1-A (irs1-a).